The primary structure comprises 399 residues: S-adenosylmethionine synthase (399 aa).

An ATP-binding site is contributed by His-17. Asp-19 contacts Mg(2+). Residue Glu-45 participates in K(+) binding. Glu-58 and Gln-101 together coordinate L-methionine. The interval 101–111 (QSPDIAQGVDE) is flexible loop. ATP contacts are provided by residues 177 to 179 (DAK), 244 to 245 (RF), Asp-253, 259 to 260 (RK), Ala-276, and Lys-280. Asp-253 contributes to the L-methionine binding site. Lys-284 serves as a coordination point for L-methionine.

The protein belongs to the AdoMet synthase family. As to quaternary structure, homotetramer; dimer of dimers. Requires Mg(2+) as cofactor. It depends on K(+) as a cofactor.

The protein localises to the cytoplasm. It carries out the reaction L-methionine + ATP + H2O = S-adenosyl-L-methionine + phosphate + diphosphate. The protein operates within amino-acid biosynthesis; S-adenosyl-L-methionine biosynthesis; S-adenosyl-L-methionine from L-methionine: step 1/1. Its function is as follows. Catalyzes the formation of S-adenosylmethionine (AdoMet) from methionine and ATP. The overall synthetic reaction is composed of two sequential steps, AdoMet formation and the subsequent tripolyphosphate hydrolysis which occurs prior to release of AdoMet from the enzyme. This Listeria welshimeri serovar 6b (strain ATCC 35897 / DSM 20650 / CCUG 15529 / CIP 8149 / NCTC 11857 / SLCC 5334 / V8) protein is S-adenosylmethionine synthase.